The primary structure comprises 125 residues: Aspartate 1-decarboxylase (125 aa).

Catalysis depends on serine 25, which acts as the Schiff-base intermediate with substrate; via pyruvic acid. A Pyruvic acid (Ser) modification is found at serine 25. Threonine 57 contacts substrate. The active-site Proton donor is tyrosine 58. A substrate-binding site is contributed by 71-73 (GAA).

The protein belongs to the PanD family. Heterooctamer of four alpha and four beta subunits. The cofactor is pyruvate. Is synthesized initially as an inactive proenzyme, which is activated by self-cleavage at a specific serine bond to produce a beta-subunit with a hydroxyl group at its C-terminus and an alpha-subunit with a pyruvoyl group at its N-terminus.

The protein localises to the cytoplasm. The catalysed reaction is L-aspartate + H(+) = beta-alanine + CO2. Its pathway is cofactor biosynthesis; (R)-pantothenate biosynthesis; beta-alanine from L-aspartate: step 1/1. Catalyzes the pyruvoyl-dependent decarboxylation of aspartate to produce beta-alanine. The polypeptide is Aspartate 1-decarboxylase (Hydrogenobaculum sp. (strain Y04AAS1)).